The sequence spans 409 residues: Pyrophosphate--fructose 6-phosphate 1-phosphotransferase (409 aa).

Gly14 serves as a coordination point for diphosphate. Position 123 (Asp123) interacts with Mg(2+). Substrate contacts are provided by residues Thr151 to Asp153, Met196 to Arg198, Glu268, and Tyr325 to Arg328. Asp153 functions as the Proton acceptor in the catalytic mechanism.

Belongs to the phosphofructokinase type A (PFKA) family. PPi-dependent PFK group II subfamily. Clade 'P' sub-subfamily. Homodimer. It depends on Mg(2+) as a cofactor.

The protein resides in the cytoplasm. It carries out the reaction beta-D-fructose 6-phosphate + diphosphate = beta-D-fructose 1,6-bisphosphate + phosphate + H(+). It participates in carbohydrate degradation; glycolysis; D-glyceraldehyde 3-phosphate and glycerone phosphate from D-glucose: step 3/4. Non-allosteric. Catalyzes the phosphorylation of D-fructose 6-phosphate, the first committing step of glycolysis. Uses inorganic phosphate (PPi) as phosphoryl donor instead of ATP like common ATP-dependent phosphofructokinases (ATP-PFKs), which renders the reaction reversible, and can thus function both in glycolysis and gluconeogenesis. Consistently, PPi-PFK can replace the enzymes of both the forward (ATP-PFK) and reverse (fructose-bisphosphatase (FBPase)) reactions. The sequence is that of Pyrophosphate--fructose 6-phosphate 1-phosphotransferase from Methylomonas methanica.